The primary structure comprises 417 residues: Fructose-1,6-bisphosphatase 1, chloroplastic (417 aa).

Residues 1-59 (MAATAATTTSSHLLLSSSRHVASSSQPSILSPRSLFSNNGKRAPTGVRNHQYASGVRCM) constitute a chloroplast transit peptide. The span at 24 to 35 (SSQPSILSPRSL) shows a compositional bias: low complexity. The segment at 24-48 (SSQPSILSPRSLFSNNGKRAPTGVR) is disordered. An N-acetylalanine modification is found at Ala60. The Mg(2+) site is built by Glu138, Glu167, Asp188, Leu190, and Asp191. 191 to 194 (DGSS) provides a ligand contact to substrate. A disulfide bridge links Cys233 with Cys238. Substrate-binding residues include Asn297, Tyr329, Tyr347, Tyr349, and Lys359. Position 365 (Glu365) interacts with Mg(2+).

It belongs to the FBPase class 1 family. As to quaternary structure, homotetramer. Mg(2+) serves as cofactor.

The protein localises to the plastid. Its subcellular location is the chloroplast stroma. The catalysed reaction is beta-D-fructose 1,6-bisphosphate + H2O = beta-D-fructose 6-phosphate + phosphate. Its pathway is carbohydrate biosynthesis; Calvin cycle. Functionally, catalyzes the irreversible reaction from fructose-1,6-bisphosphate to fructose-6-phosphate and inorganic phosphate, to regenerate the primary CO(2) acceptor molecule, ribulose-1,5-bisphosphate. Involved in the regulation of photosynthetic electron flow and sucrose synthesis. Its activity is critical for normal plant development and important for the regulation of a wide range of metabolic processes. This chain is Fructose-1,6-bisphosphatase 1, chloroplastic, found in Arabidopsis thaliana (Mouse-ear cress).